The sequence spans 137 residues: Fibroblast growth factor 2 (137 aa).

N27 lines the heparin pocket. At Y73 the chain carries Phosphotyrosine; by TEC. A Glycyl lysine isopeptide (Lys-Gly) (interchain with G-Cter in SUMO1) cross-link involves residue K86. Residues 119–135 (KRTGQYKLGSKTGPGQK) form a heparin-binding region.

This sequence belongs to the heparin-binding growth factors family. As to quaternary structure, monomer. Homodimer. Interacts with FGFR1, FGFR2, FGFR3 and FGFR4. Affinity between fibroblast growth factors (FGFs) and their receptors is increased by heparan sulfate glycosaminoglycans that function as coreceptors. Interacts with CSPG4, FGFBP1 and TEC. Found in a complex with FGFBP1, FGF1 and FGF2. Interacts with FGFBP3. Interacts with integrin ITGAV:ITGB3; the interaction is required for FGF2 signaling. Interacts with SNORC (via the extracellular domain). Interacts with glypican GPC3. Post-translationally, phosphorylation at Tyr-73 regulates FGF2 unconventional secretion.

Its subcellular location is the secreted. The protein localises to the nucleus. Functionally, acts as a ligand for FGFR1, FGFR2, FGFR3 and FGFR4. Also acts as an integrin ligand which is required for FGF2 signaling. Binds to integrin ITGAV:ITGB3. Plays an important role in the regulation of cell survival, cell division, cell differentiation and cell migration. Functions as a potent mitogen in vitro. Can induce angiogenesis. Mediates phosphorylation of ERK1/2 and thereby promotes retinal lens fiber differentiation. The sequence is that of Fibroblast growth factor 2 (FGF2) from Oryctolagus cuniculus (Rabbit).